The following is a 220-amino-acid chain: Peritrophin-55 (220 aa).

Positions 1-19 are cleaved as a signal peptide; it reads MKSVFVCTLVLALAHHAFA. An N-linked (GlcNAc...) asparagine glycan is attached at asparagine 29. Positions 33 to 95 constitute a Chitin-binding type-2 domain; sequence ITPCLGNDII…NFIPAPTCEY (63 aa). A disulfide bridge links cysteine 68 with cysteine 84. Residues 116–165 show a composition bias toward low complexity; the sequence is TTLKTTPSKTTPIVTTAPPSTPVPSTIVTNKPDPTTPKTTKPPKVTTTVN. The segment at 116 to 220 is disordered; it reads TTLKTTPSKT…TPPSIVQLQN (105 aa). Pro residues predominate over residues 197-210; sequence PTPPGMPPTPPSFG.

Post-translationally, glycosylated. Larval peritrophic membrane.

Its function is as follows. May bind oligosaccharide structures. This is Peritrophin-55 from Lucilia cuprina (Green bottle fly).